Consider the following 118-residue polypeptide: Large ribosomal subunit protein bL20 (118 aa).

It belongs to the bacterial ribosomal protein bL20 family.

In terms of biological role, binds directly to 23S ribosomal RNA and is necessary for the in vitro assembly process of the 50S ribosomal subunit. It is not involved in the protein synthesizing functions of that subunit. The chain is Large ribosomal subunit protein bL20 from Trichodesmium erythraeum (strain IMS101).